Here is an 80-residue protein sequence, read N- to C-terminus: Cytochrome c oxidase subunit 7B, mitochondrial (80 aa).

Residues 1–24 (MLPLAKNALSRLQVRSIQQVVARQ) constitute a mitochondrion transit peptide. Residues 25-39 (SHQKRAPSFHDKYGN) are Mitochondrial matrix-facing. Residues 40–60 (AILAGGAIFCVSTWTYTATQI) form a helical membrane-spanning segment. The Mitochondrial intermembrane portion of the chain corresponds to 61–80 (GIEWNMSPVGRVTPKEWRDQ).

Belongs to the cytochrome c oxidase VIIb family. As to quaternary structure, component of the cytochrome c oxidase (complex IV, CIV), a multisubunit enzyme composed of 14 subunits. The complex is composed of a catalytic core of 3 subunits MT-CO1, MT-CO2 and MT-CO3, encoded in the mitochondrial DNA, and 11 supernumerary subunits COX4I, COX5A, COX5B, COX6A, COX6B, COX6C, COX7A, COX7B, COX7C, COX8 and NDUFA4, which are encoded in the nuclear genome. The complex exists as a monomer or a dimer and forms supercomplexes (SCs) in the inner mitochondrial membrane with NADH-ubiquinone oxidoreductase (complex I, CI) and ubiquinol-cytochrome c oxidoreductase (cytochrome b-c1 complex, complex III, CIII), resulting in different assemblies (supercomplex SCI(1)III(2)IV(1) and megacomplex MCI(2)III(2)IV(2)).

The protein localises to the mitochondrion inner membrane. It functions in the pathway energy metabolism; oxidative phosphorylation. Its function is as follows. Component of the cytochrome c oxidase, the last enzyme in the mitochondrial electron transport chain which drives oxidative phosphorylation. The respiratory chain contains 3 multisubunit complexes succinate dehydrogenase (complex II, CII), ubiquinol-cytochrome c oxidoreductase (cytochrome b-c1 complex, complex III, CIII) and cytochrome c oxidase (complex IV, CIV), that cooperate to transfer electrons derived from NADH and succinate to molecular oxygen, creating an electrochemical gradient over the inner membrane that drives transmembrane transport and the ATP synthase. Cytochrome c oxidase is the component of the respiratory chain that catalyzes the reduction of oxygen to water. Electrons originating from reduced cytochrome c in the intermembrane space (IMS) are transferred via the dinuclear copper A center (CU(A)) of subunit 2 and heme A of subunit 1 to the active site in subunit 1, a binuclear center (BNC) formed by heme A3 and copper B (CU(B)). The BNC reduces molecular oxygen to 2 water molecules using 4 electrons from cytochrome c in the IMS and 4 protons from the mitochondrial matrix. Plays a role in proper central nervous system (CNS) development in vertebrates. The chain is Cytochrome c oxidase subunit 7B, mitochondrial (Cox7b) from Mus musculus (Mouse).